We begin with the raw amino-acid sequence, 101 residues long: ATP-dependent Clp protease adapter protein ClpS 1 (101 aa).

This sequence belongs to the ClpS family. In terms of assembly, binds to the N-terminal domain of the chaperone ClpA.

Functionally, involved in the modulation of the specificity of the ClpAP-mediated ATP-dependent protein degradation. This is ATP-dependent Clp protease adapter protein ClpS 1 from Bradyrhizobium diazoefficiens (strain JCM 10833 / BCRC 13528 / IAM 13628 / NBRC 14792 / USDA 110).